The following is a 384-amino-acid chain: ATP phosphoribosyltransferase regulatory subunit (384 aa).

It belongs to the class-II aminoacyl-tRNA synthetase family. HisZ subfamily. Heteromultimer composed of HisG and HisZ subunits.

The protein resides in the cytoplasm. It participates in amino-acid biosynthesis; L-histidine biosynthesis; L-histidine from 5-phospho-alpha-D-ribose 1-diphosphate: step 1/9. In terms of biological role, required for the first step of histidine biosynthesis. May allow the feedback regulation of ATP phosphoribosyltransferase activity by histidine. This is ATP phosphoribosyltransferase regulatory subunit from Paracidovorax citrulli (strain AAC00-1) (Acidovorax citrulli).